We begin with the raw amino-acid sequence, 431 residues long: Histidinol dehydrogenase (431 aa).

Residues Y127, Q189, and N212 each coordinate NAD(+). 3 residues coordinate substrate: S237, Q259, and H262. Residues Q259 and H262 each coordinate Zn(2+). Catalysis depends on proton acceptor residues E326 and H327. H327, D360, E414, and H419 together coordinate substrate. Position 360 (D360) interacts with Zn(2+). Position 419 (H419) interacts with Zn(2+).

The protein belongs to the histidinol dehydrogenase family. Zn(2+) serves as cofactor.

The catalysed reaction is L-histidinol + 2 NAD(+) + H2O = L-histidine + 2 NADH + 3 H(+). It functions in the pathway amino-acid biosynthesis; L-histidine biosynthesis; L-histidine from 5-phospho-alpha-D-ribose 1-diphosphate: step 9/9. In terms of biological role, catalyzes the sequential NAD-dependent oxidations of L-histidinol to L-histidinaldehyde and then to L-histidine. The polypeptide is Histidinol dehydrogenase (Xylella fastidiosa (strain Temecula1 / ATCC 700964)).